The chain runs to 481 residues: Proline--tRNA ligase (481 aa).

It belongs to the class-II aminoacyl-tRNA synthetase family. ProS type 3 subfamily. Homodimer.

It is found in the cytoplasm. The catalysed reaction is tRNA(Pro) + L-proline + ATP = L-prolyl-tRNA(Pro) + AMP + diphosphate. Its function is as follows. Catalyzes the attachment of proline to tRNA(Pro) in a two-step reaction: proline is first activated by ATP to form Pro-AMP and then transferred to the acceptor end of tRNA(Pro). Can inadvertently accommodate and process cysteine. Misacylated Cys-tRNA(Pro) is not edited by ProRS; this function may be provided by ProX. This Acetoanaerobium sticklandii (strain ATCC 12662 / DSM 519 / JCM 1433 / CCUG 9281 / NCIMB 10654 / HF) (Clostridium sticklandii) protein is Proline--tRNA ligase (proS).